A 52-amino-acid chain; its full sequence is MKVTCVLTLAVLILTVGQMVTADCRSPGSWCFYKHSNCCSGNCFLWCVQNGK.

A signal peptide spans 1–22 (MKVTCVLTLAVLILTVGQMVTA). Cystine bridges form between cysteine 24–cysteine 39, cysteine 31–cysteine 43, and cysteine 38–cysteine 47.

Expressed by the venom duct.

It is found in the secreted. Its function is as follows. Probable neurotoxin. This is Conotoxin Cal6.36 from Californiconus californicus (California cone).